A 259-amino-acid chain; its full sequence is Large ribosomal subunit protein uL2m (259 aa).

The tract at residues 234 to 259 (VAMNPVDHPNGGRTKTPKPERSPGVE) is disordered. Basic and acidic residues predominate over residues 250-259 (PKPERSPGVE).

It belongs to the universal ribosomal protein uL2 family.

It is found in the mitochondrion. The chain is Large ribosomal subunit protein uL2m (RPL2) from Paramecium tetraurelia.